Consider the following 226-residue polypeptide: Cell division protein SepF (226 aa).

A disordered region spans residues 20–116 (RAYDDAGYDK…ESLTYHTRDN (97 aa)). Basic and acidic residues predominate over residues 22-44 (YDDAGYDKGGYRESRYRSSRYSE). Acidic residues predominate over residues 45-56 (DFGDEDDEDEEA). Over residues 62–95 (RRGDRSRLERAAARSGDVDHNVEGEQPERVERAS) the composition is skewed to basic and acidic residues. Over residues 97-111 (RSITRSAEPSESLTY) the composition is skewed to polar residues.

It belongs to the SepF family. As to quaternary structure, homodimer. Interacts with FtsZ.

The protein localises to the cytoplasm. Its function is as follows. Cell division protein that is part of the divisome complex and is recruited early to the Z-ring. Probably stimulates Z-ring formation, perhaps through the cross-linking of FtsZ protofilaments. Its function overlaps with FtsA. The sequence is that of Cell division protein SepF from Salinispora arenicola (strain CNS-205).